The primary structure comprises 489 residues: N-succinylglutamate 5-semialdehyde dehydrogenase (489 aa).

223–228 contacts NAD(+); the sequence is GSASTG. Active-site residues include E246 and C280.

It belongs to the aldehyde dehydrogenase family. AstD subfamily.

The enzyme catalyses N-succinyl-L-glutamate 5-semialdehyde + NAD(+) + H2O = N-succinyl-L-glutamate + NADH + 2 H(+). The protein operates within amino-acid degradation; L-arginine degradation via AST pathway; L-glutamate and succinate from L-arginine: step 4/5. Its function is as follows. Catalyzes the NAD-dependent reduction of succinylglutamate semialdehyde into succinylglutamate. This Acinetobacter baylyi (strain ATCC 33305 / BD413 / ADP1) protein is N-succinylglutamate 5-semialdehyde dehydrogenase.